A 662-amino-acid chain; its full sequence is PsbB mRNA maturation factor Mbb1, chloroplastic (662 aa).

A chloroplast-targeting transit peptide spans 1–50; it reads MSLVPFSQLWRGVRTRGPVEQASSSSSSSSSSRRTWYAPARSQTGVQVAA. Disordered stretches follow at residues 14–38 and 75–101; these read RTRGPVEQASSSSSSSSSSRRTWYA and IIADLSSSGSGDGEGERGDATGSRDEA. Residues 23–32 show a composition bias toward low complexity; the sequence is SSSSSSSSSS. Residues 88 to 101 are compositionally biased toward basic and acidic residues; it reads EGERGDATGSRDEA. TPR repeat units lie at residues 126–160, 161–194, 196–229, 231–263, 269–302, 305–338, 339–372, 373–406, 408–440, and 444–477; these read SRIRARQTLDLNERKSLYKAAEDGLRRCLALDPAD, PRAYVVLGKTLVQQKRYDEARQLYQDGCANTGNV, PYIWSAWGWLEARTGNVERARKLYDAAVVVDGTH, CAWHKWGMLEKGQGNFTRARDLWMQGIQRCRRK, AYLYNALGCMAAQLGRVGEARSWFEEGTRSAEGA, VALWQAWAVLEAKQGDPTVVRYLFRKALGANPRS, RYVHLAWALWERRQGNPQHCLALLRRGCELNPTD, PALYQAWALVEKQAGRIERARELFEQGLRADPSD, YMWQAYGVMEAEQGNMDRARQLFQEGVWADPRS, and VYVFHAWGALEWQAGNVQTARELFKAAVRVDPKS. 2 disordered regions span residues 540 to 563 and 598 to 662; these read SDGNGSSSSNGGAGGQQAGSEAAA and LPDF…RSMG.

In terms of assembly, part of a 300 kDa complex that associates with RNA.

The protein localises to the plastid. It localises to the chloroplast stroma. Functionally, involved, directly or indirectly, in the processing of the chloroplast encoded psbB mRNA to its mature form, acting via the 5'-UTR of the psbB mRNA. This chain is PsbB mRNA maturation factor Mbb1, chloroplastic (MBB1), found in Chlamydomonas reinhardtii (Chlamydomonas smithii).